The chain runs to 192 residues: Phosphoheptose isomerase (192 aa).

The region spanning 35 to 192 (LIETLENQGK…CIERHFAHKN (158 aa)) is the SIS domain. 50 to 52 (NGG) is a substrate binding site. Zn(2+) is bound by residues H59 and E63. Substrate is bound by residues E63, 92-93 (ND), 118-120 (STS), S123, and Q170. Positions 170 and 178 each coordinate Zn(2+).

Belongs to the SIS family. GmhA subfamily. As to quaternary structure, homotetramer. Zn(2+) is required as a cofactor.

The protein localises to the cytoplasm. The catalysed reaction is 2 D-sedoheptulose 7-phosphate = D-glycero-alpha-D-manno-heptose 7-phosphate + D-glycero-beta-D-manno-heptose 7-phosphate. It functions in the pathway carbohydrate biosynthesis; D-glycero-D-manno-heptose 7-phosphate biosynthesis; D-glycero-alpha-D-manno-heptose 7-phosphate and D-glycero-beta-D-manno-heptose 7-phosphate from sedoheptulose 7-phosphate: step 1/1. The protein operates within bacterial outer membrane biogenesis; LPS core biosynthesis. Catalyzes the isomerization of sedoheptulose 7-phosphate in D-glycero-D-manno-heptose 7-phosphate. This is Phosphoheptose isomerase from Helicobacter pylori (strain ATCC 700392 / 26695) (Campylobacter pylori).